The sequence spans 364 residues: 3-isopropylmalate dehydrogenase (364 aa).

Residue 79–92 participates in NAD(+) binding; the sequence is GPKWEHLPAAEQPE. Substrate is bound by residues Arg100, Arg110, Arg139, and Asp228. 3 residues coordinate Mg(2+): Asp228, Asp252, and Asp256. Residue 286–298 participates in NAD(+) binding; the sequence is GSAPDIAGKDIAN.

Belongs to the isocitrate and isopropylmalate dehydrogenases family. LeuB type 1 subfamily. In terms of assembly, homodimer. The cofactor is Mg(2+). It depends on Mn(2+) as a cofactor.

It localises to the cytoplasm. It carries out the reaction (2R,3S)-3-isopropylmalate + NAD(+) = 4-methyl-2-oxopentanoate + CO2 + NADH. The protein operates within amino-acid biosynthesis; L-leucine biosynthesis; L-leucine from 3-methyl-2-oxobutanoate: step 3/4. In terms of biological role, catalyzes the oxidation of 3-carboxy-2-hydroxy-4-methylpentanoate (3-isopropylmalate) to 3-carboxy-4-methyl-2-oxopentanoate. The product decarboxylates to 4-methyl-2 oxopentanoate. This chain is 3-isopropylmalate dehydrogenase, found in Sodalis glossinidius (strain morsitans).